The sequence spans 489 residues: Probable apyrase 1 (489 aa).

Over 1–28 (MRRFSAAAGARQQQQQGEAVSDRVLRFR) the chain is Cytoplasmic. A helical; Signal-anchor for type II membrane protein membrane pass occupies residues 29 to 49 (GVLVVVLAPVLLISLVLLLMP). Residues 50 to 489 (RAPASATVEG…GSAIEVASSS (440 aa)) are Extracellular-facing. Residue 89–99 (VIFDAGSSGSR) coordinates ATP. The active-site Proton acceptor is E211. Residue 235–245 (GVVDLGGGSVQ) coordinates ATP.

This sequence belongs to the GDA1/CD39 NTPase family. It depends on Ca(2+) as a cofactor.

Its subcellular location is the membrane. It carries out the reaction a ribonucleoside 5'-triphosphate + 2 H2O = a ribonucleoside 5'-phosphate + 2 phosphate + 2 H(+). Its function is as follows. Catalyzes the hydrolysis of phosphoanhydride bonds of nucleoside tri- and di-phosphates. In Oryza sativa subsp. japonica (Rice), this protein is Probable apyrase 1 (APY1).